The following is a 248-amino-acid chain: Probable transcriptional regulatory protein MCA1220 (248 aa).

It belongs to the TACO1 family.

The protein localises to the cytoplasm. The polypeptide is Probable transcriptional regulatory protein MCA1220 (Methylococcus capsulatus (strain ATCC 33009 / NCIMB 11132 / Bath)).